A 420-amino-acid polypeptide reads, in one-letter code: Serine palmitoyltransferase (420 aa).

Pyridoxal 5'-phosphate-binding positions include 134–135 (GY), His-234, Thr-262, and Ser-264. The residue at position 265 (Lys-265) is an N6-(pyridoxal phosphate)lysine.

Belongs to the class-II pyridoxal-phosphate-dependent aminotransferase family. Homodimer. Pyridoxal 5'-phosphate is required as a cofactor.

It is found in the cytoplasm. The enzyme catalyses L-serine + hexadecanoyl-CoA + H(+) = 3-oxosphinganine + CO2 + CoA. The protein operates within lipid metabolism; sphingolipid metabolism. Not inhibited by relatively high concentrations of palmitoyl-CoA. Inhibited by both D-cycloserine (DCS) and L-cycloserine (LCS), which inactivate SPT by transamination to form a free pyridoxamine 5'-phosphate (PMP) and beta-aminooxyacetaldehyde that remain bound at the active site. Inhibition is reversed by incubation with excess pyridoxal phosphate. Inhibited by the fungal natural product myriocin, which acts as a competitive inhibitor for both L-serine and palmitoyl-CoA substrates. Its function is as follows. Catalyzes the condensation of L-serine with palmitoyl-CoA (hexadecanoyl-CoA) to produce 3-oxosphinganine. Exhibits a broad substrate specificity concerning the chain length and the degree of unsaturation of acyl-CoA. The protein is Serine palmitoyltransferase of Sphingomonas paucimobilis (Pseudomonas paucimobilis).